A 429-amino-acid polypeptide reads, in one-letter code: uncharacterized protein (429 aa).

10 helical membrane passes run 26-46 (VALT…HDIF), 51-71 (TGID…VGVL), 99-119 (LVLV…VLLI), 135-155 (TSFL…TLVG), 173-193 (FMLH…AVLP), 223-243 (LLVK…AHPV), 278-298 (TLLF…TGVV), 311-331 (GNIV…SGII), 361-381 (WWAL…GASA), and 407-427 (VVTA…YFVL).

It belongs to the CitM (TC 2.A.11) transporter family.

The protein resides in the cell membrane. This is an uncharacterized protein from Mycobacterium tuberculosis (strain ATCC 25618 / H37Rv).